Reading from the N-terminus, the 266-residue chain is Glutamate racemase (266 aa).

Residues 9 to 10 (DS) and 41 to 42 (YG) contribute to the substrate site. Residue C73 is the Proton donor/acceptor of the active site. 74–75 (NS) lines the substrate pocket. Catalysis depends on C183, which acts as the Proton donor/acceptor. 184 to 185 (TH) lines the substrate pocket.

It belongs to the aspartate/glutamate racemases family.

It catalyses the reaction L-glutamate = D-glutamate. It participates in cell wall biogenesis; peptidoglycan biosynthesis. Provides the (R)-glutamate required for cell wall biosynthesis. In Shewanella loihica (strain ATCC BAA-1088 / PV-4), this protein is Glutamate racemase.